Reading from the N-terminus, the 347-residue chain is MSPYVLTIMSLSLLLGTTMTLISDHWLTAWMGLEINTLAVIPLMTKPHHSRSTESAIKYFMIQATASMIILFSAIFNASTTNQWITGQISNTSASFMMTIALAMKLGLAPFHFWVPEVTQGIPLLSGMILLTWQKIAPISIFYQISPSLNMSLLMILSITSTLLGGWGGLNQTQLRKILAYSSIAHMGWMTIIIMIYPSLTILNLILYLASTITMFMVLNQSSSTKINSLSILWNKSAPNMIIITLTLLSLGGLPPLTGFMPKWLILQELINFNNIPLAMMLALSTLLNLFFYMRIIYSSTLTMFPSINNTKLQWALYSHKTILPIPTLTIISSLLLPMTPMFITLS.

Helical transmembrane passes span 2–22 (SPYV…MTLI), 25–45 (HWLT…PLMT), 56–76 (AIKY…SAIF), 96–116 (FMMT…FWVP), 122–142 (IPLL…ISIF), 149–169 (LNMS…GWGG), 178–197 (ILAY…IMIY), 202–219 (ILNL…FMVL), 241–261 (MIII…TGFM), 278–298 (LAMM…RIIY), and 323–343 (ILPI…TPMF).

Belongs to the complex I subunit 2 family. Core subunit of respiratory chain NADH dehydrogenase (Complex I) which is composed of 45 different subunits. Interacts with TMEM242.

It is found in the mitochondrion inner membrane. The enzyme catalyses a ubiquinone + NADH + 5 H(+)(in) = a ubiquinol + NAD(+) + 4 H(+)(out). In terms of biological role, core subunit of the mitochondrial membrane respiratory chain NADH dehydrogenase (Complex I) which catalyzes electron transfer from NADH through the respiratory chain, using ubiquinone as an electron acceptor. Essential for the catalytic activity and assembly of complex I. The protein is NADH-ubiquinone oxidoreductase chain 2 of Metachirus nudicaudatus (Brown four-eyed opossum).